A 474-amino-acid polypeptide reads, in one-letter code: Bifunctional protein HldE (474 aa).

The segment at 1-318 (MKLSMPRFDQ…RAIQREEGSE (318 aa)) is ribokinase. Residue 194–197 (NLSE) participates in ATP binding. Asp-263 is a catalytic residue. Residues 343-474 (FTNGCFDILH…AIVEKIRGQG (132 aa)) are cytidylyltransferase.

It in the N-terminal section; belongs to the carbohydrate kinase PfkB family. In the C-terminal section; belongs to the cytidylyltransferase family. In terms of assembly, homodimer.

The enzyme catalyses D-glycero-beta-D-manno-heptose 7-phosphate + ATP = D-glycero-beta-D-manno-heptose 1,7-bisphosphate + ADP + H(+). It catalyses the reaction D-glycero-beta-D-manno-heptose 1-phosphate + ATP + H(+) = ADP-D-glycero-beta-D-manno-heptose + diphosphate. The protein operates within nucleotide-sugar biosynthesis; ADP-L-glycero-beta-D-manno-heptose biosynthesis; ADP-L-glycero-beta-D-manno-heptose from D-glycero-beta-D-manno-heptose 7-phosphate: step 1/4. It functions in the pathway nucleotide-sugar biosynthesis; ADP-L-glycero-beta-D-manno-heptose biosynthesis; ADP-L-glycero-beta-D-manno-heptose from D-glycero-beta-D-manno-heptose 7-phosphate: step 3/4. Functionally, catalyzes the phosphorylation of D-glycero-D-manno-heptose 7-phosphate at the C-1 position to selectively form D-glycero-beta-D-manno-heptose-1,7-bisphosphate. In terms of biological role, catalyzes the ADP transfer from ATP to D-glycero-beta-D-manno-heptose 1-phosphate, yielding ADP-D-glycero-beta-D-manno-heptose. The sequence is that of Bifunctional protein HldE from Pseudomonas syringae pv. syringae (strain B728a).